Here is a 474-residue protein sequence, read N- to C-terminus: Transcription termination factor Rho (474 aa).

Residues 1–60 (MTEELDNTPSPAGDIPQETLPKPLPAPEETAGEQPAAAPEENRGNAVREEEEAAPVLEQI) are disordered. Residues 107–182 (EVVVSGVMEQ…ASVISVEDIP (76 aa)) enclose the Rho RNA-BD domain. ATP is bound by residues 226–231 (GKGQRG), 238–243 (RGGKTV), and arginine 269.

It belongs to the Rho family. In terms of assembly, homohexamer. The homohexamer assembles into an open ring structure.

In terms of biological role, facilitates transcription termination by a mechanism that involves Rho binding to the nascent RNA, activation of Rho's RNA-dependent ATPase activity, and release of the mRNA from the DNA template. This chain is Transcription termination factor Rho, found in Akkermansia muciniphila (strain ATCC BAA-835 / DSM 22959 / JCM 33894 / BCRC 81048 / CCUG 64013 / CIP 107961 / Muc).